The primary structure comprises 631 residues: Probable methyltransferase PMT16 (631 aa).

At 1–14 (MNLFTRISSRTKKA) the chain is on the cytoplasmic side. Residues 15–35 (NLYYVTLVALLCIASYLLGIW) form a helical; Signal-anchor for type II membrane protein membrane-spanning segment. The Lumenal portion of the chain corresponds to 36-631 (QNTAVNPRAA…EDKNNTSALS (596 aa)). Residues asparagine 61, asparagine 230, and asparagine 626 are each glycosylated (N-linked (GlcNAc...) asparagine).

Belongs to the methyltransferase superfamily.

It localises to the endoplasmic reticulum membrane. The chain is Probable methyltransferase PMT16 from Arabidopsis thaliana (Mouse-ear cress).